A 488-amino-acid polypeptide reads, in one-letter code: Transmembrane protein 39A (488 aa).

Asn-31 and Asn-39 each carry an N-linked (GlcNAc...) asparagine glycan. 3 consecutive transmembrane segments (helical) span residues 72-92 (GLLF…IQYI), 110-130 (TSLN…VMLA), and 155-175 (LITA…WTLV). Asn-180 carries an N-linked (GlcNAc...) asparagine glycan. The next 5 helical transmembrane spans lie at 182-202 (SVLN…LCCF), 287-307 (EVLF…LCFV), 319-339 (CEHL…QLLP), 420-440 (LLNL…YSLL), and 446-466 (NHTL…FKLL).

It belongs to the TMEM39 family.

Its subcellular location is the endoplasmic reticulum membrane. Functionally, regulates autophagy by controlling the spatial distribution and levels of the intracellular phosphatidylinositol 4-phosphate (PtdIns(4)P) pools. Modulates (PtdIns(4)P) levels by regulating the ER-to-Golgi trafficking of the phosphatidylinositide phosphatase SACM1L. The protein is Transmembrane protein 39A (tmem39a) of Xenopus tropicalis (Western clawed frog).